The sequence spans 398 residues: NADH-quinone oxidoreductase subunit D (398 aa).

This sequence belongs to the complex I 49 kDa subunit family. In terms of assembly, NDH-1 is composed of 14 different subunits. Subunits NuoB, C, D, E, F, and G constitute the peripheral sector of the complex.

It is found in the cell inner membrane. The enzyme catalyses a quinone + NADH + 5 H(+)(in) = a quinol + NAD(+) + 4 H(+)(out). Functionally, NDH-1 shuttles electrons from NADH, via FMN and iron-sulfur (Fe-S) centers, to quinones in the respiratory chain. The immediate electron acceptor for the enzyme in this species is believed to be ubiquinone. Couples the redox reaction to proton translocation (for every two electrons transferred, four hydrogen ions are translocated across the cytoplasmic membrane), and thus conserves the redox energy in a proton gradient. This chain is NADH-quinone oxidoreductase subunit D, found in Bradyrhizobium diazoefficiens (strain JCM 10833 / BCRC 13528 / IAM 13628 / NBRC 14792 / USDA 110).